The following is a 309-amino-acid chain: Dihydroorotate dehydrogenase B (NAD(+)), catalytic subunit (309 aa).

Residues Ser-21 and 45 to 46 (KA) contribute to the FMN site. Substrate-binding positions include Lys-45 and 69–73 (NAIGL). FMN contacts are provided by Asn-99 and Asn-127. Residue Asn-127 participates in substrate binding. Residue Cys-130 is the Nucleophile of the active site. Lys-165 and Ile-191 together coordinate FMN. Residue 192–193 (NT) participates in substrate binding. Residues Gly-217, 243–244 (GG), and 265–266 (GT) each bind FMN.

This sequence belongs to the dihydroorotate dehydrogenase family. Type 1 subfamily. In terms of assembly, heterotetramer of 2 PyrK and 2 PyrD type B subunits. Requires FMN as cofactor.

Its subcellular location is the cytoplasm. The catalysed reaction is (S)-dihydroorotate + NAD(+) = orotate + NADH + H(+). The protein operates within pyrimidine metabolism; UMP biosynthesis via de novo pathway; orotate from (S)-dihydroorotate (NAD(+) route): step 1/1. Its function is as follows. Catalyzes the conversion of dihydroorotate to orotate with NAD(+) as electron acceptor. The protein is Dihydroorotate dehydrogenase B (NAD(+)), catalytic subunit (pyrD) of Bacillus cereus (strain B4264).